The chain runs to 330 residues: Aspartate--ammonia ligase (330 aa).

It belongs to the class-II aminoacyl-tRNA synthetase family. AsnA subfamily.

It localises to the cytoplasm. It carries out the reaction L-aspartate + NH4(+) + ATP = L-asparagine + AMP + diphosphate + H(+). It functions in the pathway amino-acid biosynthesis; L-asparagine biosynthesis; L-asparagine from L-aspartate (ammonia route): step 1/1. This is Aspartate--ammonia ligase from Escherichia coli O17:K52:H18 (strain UMN026 / ExPEC).